The primary structure comprises 193 residues: Holliday junction branch migration complex subunit RuvA (193 aa).

Positions 1-64 (MIGRIAGILL…EDAHLLYGFL (64 aa)) are domain I. The domain II stretch occupies residues 65–139 (TPQERTTFRE…GKLGADLGAL (75 aa)). Residues 139–143 (LAGAA) form a flexible linker region. The segment at 144–193 (SQSDHAADILNALVALGYSEKEGLAAIKNVPAGTGVSEGIKLALKALSKV) is domain III.

This sequence belongs to the RuvA family. As to quaternary structure, homotetramer. Forms an RuvA(8)-RuvB(12)-Holliday junction (HJ) complex. HJ DNA is sandwiched between 2 RuvA tetramers; dsDNA enters through RuvA and exits via RuvB. An RuvB hexamer assembles on each DNA strand where it exits the tetramer. Each RuvB hexamer is contacted by two RuvA subunits (via domain III) on 2 adjacent RuvB subunits; this complex drives branch migration. In the full resolvosome a probable DNA-RuvA(4)-RuvB(12)-RuvC(2) complex forms which resolves the HJ.

The protein resides in the cytoplasm. The RuvA-RuvB-RuvC complex processes Holliday junction (HJ) DNA during genetic recombination and DNA repair, while the RuvA-RuvB complex plays an important role in the rescue of blocked DNA replication forks via replication fork reversal (RFR). RuvA specifically binds to HJ cruciform DNA, conferring on it an open structure. The RuvB hexamer acts as an ATP-dependent pump, pulling dsDNA into and through the RuvAB complex. HJ branch migration allows RuvC to scan DNA until it finds its consensus sequence, where it cleaves and resolves the cruciform DNA. The chain is Holliday junction branch migration complex subunit RuvA from Burkholderia ambifaria (strain ATCC BAA-244 / DSM 16087 / CCUG 44356 / LMG 19182 / AMMD) (Burkholderia cepacia (strain AMMD)).